The following is a 65-amino-acid chain: uncharacterized protein (65 aa).

Residues 1 to 22 (MEKETPQQETKQSTNKESGFFD) are disordered. The segment covering 7-17 (QQETKQSTNKE) has biased composition (polar residues). The stretch at 22–65 (DEIIKRTNQLLEKEKELHEKYNKEITSQQDQIDQLKKKINQLKY) forms a coiled coil.

This is an uncharacterized protein from Dictyostelium discoideum (Social amoeba).